We begin with the raw amino-acid sequence, 428 residues long: 3-phosphoshikimate 1-carboxyvinyltransferase (428 aa).

3 residues coordinate 3-phosphoshikimate: Lys-23, Ser-24, and Arg-28. Lys-23 serves as a coordination point for phosphoenolpyruvate. The phosphoenolpyruvate site is built by Gly-97 and Arg-125. 7 residues coordinate 3-phosphoshikimate: Ser-170, Ser-171, Gln-172, Ser-198, Asp-314, Asn-337, and Lys-341. Phosphoenolpyruvate is bound at residue Gln-172. Asp-314 acts as the Proton acceptor in catalysis. Phosphoenolpyruvate contacts are provided by Arg-345, Arg-387, and Lys-412.

This sequence belongs to the EPSP synthase family. As to quaternary structure, monomer.

It is found in the cytoplasm. The catalysed reaction is 3-phosphoshikimate + phosphoenolpyruvate = 5-O-(1-carboxyvinyl)-3-phosphoshikimate + phosphate. It participates in metabolic intermediate biosynthesis; chorismate biosynthesis; chorismate from D-erythrose 4-phosphate and phosphoenolpyruvate: step 6/7. In terms of biological role, catalyzes the transfer of the enolpyruvyl moiety of phosphoenolpyruvate (PEP) to the 5-hydroxyl of shikimate-3-phosphate (S3P) to produce enolpyruvyl shikimate-3-phosphate and inorganic phosphate. This is 3-phosphoshikimate 1-carboxyvinyltransferase from Hamiltonella defensa subsp. Acyrthosiphon pisum (strain 5AT).